The chain runs to 661 residues: Serine/threonine-protein phosphatase rdgC (661 aa).

Positions 7–32 (RAAIFIQKWYRRHQARREMQRRCNWQ) constitute an IQ domain. The catalytic stretch occupies residues 105 to 413 (IDLLIDVFRK…HFVQYISAAS (309 aa)). 4 residues coordinate Mn(2+): Asp158, His160, Asp187, and Asn219. His220 serves as the catalytic Proton donor. His271 and His360 together coordinate Mn(2+). 3 consecutive EF-hand domains span residues 441-476 (DHRD…VTKL), 526-561 (ANKA…LVAH), and 566-601 (YSKA…SDLH). Positions 539, 541, 543, 545, 550, 579, 581, 583, 585, and 590 each coordinate Ca(2+). Residues 606–625 (QDENIRRRSTGRPSVAKTAT) are disordered.

Belongs to the PPP phosphatase family. It depends on Mn(2+) as a cofactor. As to expression, expressed in the visual system of the fly, as well as in the mushroom bodies of the central brain.

It catalyses the reaction O-phospho-L-seryl-[protein] + H2O = L-seryl-[protein] + phosphate. The catalysed reaction is O-phospho-L-threonyl-[protein] + H2O = L-threonyl-[protein] + phosphate. Phosphatase required to prevent light-induced retinal degeneration. The protein is Serine/threonine-protein phosphatase rdgC (rdgC) of Drosophila melanogaster (Fruit fly).